We begin with the raw amino-acid sequence, 229 residues long: Potassium/proton antiporter CemA (229 aa).

Helical transmembrane passes span 6 to 26 (AFIPFLYFTSIVFFPWWISLC), 107 to 127 (IFNFSTNLISFVILSSYSFWG), 152 to 172 (FLILLLTDLCIGFHSPHGWEL), and 190 to 210 (LSGLVSTFPVILDTIFKYWIF).

Belongs to the CemA family.

It is found in the plastid. The protein resides in the chloroplast inner membrane. It carries out the reaction K(+)(in) + H(+)(out) = K(+)(out) + H(+)(in). Contributes to K(+)/H(+) antiport activity by supporting proton efflux to control proton extrusion and homeostasis in chloroplasts in a light-dependent manner to modulate photosynthesis. Prevents excessive induction of non-photochemical quenching (NPQ) under continuous-light conditions. Indirectly promotes efficient inorganic carbon uptake into chloroplasts. The chain is Potassium/proton antiporter CemA from Aethionema cordifolium (Lebanon stonecress).